We begin with the raw amino-acid sequence, 205 residues long: MSDTSETICSMCQLFYVNKWVLGTGGGIGIKQDNIAYISPSGIEKELLEPEQIVKYNIQDDTYQCGAPGLKPSACTPLFLELFKTLGASCVIHTHSINAVLCSMIYEKEFTIKDIEQIKAIPKGDGTNLRNVDTLRIPIIDNAPEEQDLMPALKQMIKDYPNACAVLVKRHGLFVWGPTPKKAKIYIESIDYLFEVALKMKELGQ.

Cys75 contacts substrate. His93 and His95 together coordinate Zn(2+). Glu116 serves as the catalytic Proton donor/acceptor. Zn(2+) is bound at residue His171.

It belongs to the aldolase class II family. MtnB subfamily. Zn(2+) is required as a cofactor.

The protein resides in the cytoplasm. It carries out the reaction 5-(methylsulfanyl)-D-ribulose 1-phosphate = 5-methylsulfanyl-2,3-dioxopentyl phosphate + H2O. Its pathway is amino-acid biosynthesis; L-methionine biosynthesis via salvage pathway; L-methionine from S-methyl-5-thio-alpha-D-ribose 1-phosphate: step 2/6. Its function is as follows. Catalyzes the dehydration of methylthioribulose-1-phosphate (MTRu-1-P) into 2,3-diketo-5-methylthiopentyl-1-phosphate (DK-MTP-1-P). This is Methylthioribulose-1-phosphate dehydratase from Kluyveromyces lactis (strain ATCC 8585 / CBS 2359 / DSM 70799 / NBRC 1267 / NRRL Y-1140 / WM37) (Yeast).